The following is a 90-amino-acid chain: Small ribosomal subunit protein bS20 (90 aa).

It belongs to the bacterial ribosomal protein bS20 family.

Functionally, binds directly to 16S ribosomal RNA. This is Small ribosomal subunit protein bS20 from Francisella philomiragia subsp. philomiragia (strain ATCC 25017 / CCUG 19701 / FSC 153 / O#319-036).